The chain runs to 354 residues: Arginase-2, mitochondrial (354 aa).

A mitochondrion-targeting transit peptide spans 1-22 (MSYGSCVSRLLRTRVQSVLKKS). Residues His-120, Asp-143, His-145, and Asp-147 each coordinate Mn(2+). Residues 145–149 (HADIN), 156–158 (SGN), and Asp-202 contribute to the substrate site. Mn(2+) contacts are provided by Asp-251 and Asp-253. Substrate-binding residues include Thr-265 and Glu-296. A disordered region spans residues 330 to 354 (GHTVYEQLPPPSSPHESENAERVRI). The segment covering 344–354 (HESENAERVRI) has biased composition (basic and acidic residues).

Belongs to the arginase family. As to quaternary structure, homotrimer. Mn(2+) serves as cofactor.

The protein resides in the mitochondrion. It carries out the reaction L-arginine + H2O = urea + L-ornithine. Its pathway is nitrogen metabolism; urea cycle; L-ornithine and urea from L-arginine: step 1/1. Functionally, may play a role in the regulation of extra-urea cycle arginine metabolism and also in down-regulation of nitric oxide synthesis. Extrahepatic arginase functions to regulate L-arginine bioavailability to nitric oxid synthase (NOS). Arginine metabolism is a critical regulator of innate and adaptive immune responses. Seems to be involved in negative regulation of the survival capacity of activated T cells. May suppress inflammation-related signaling in asthmatic airway epithelium. May play a role in promoting prenatal immune suppression. Regulates RPS6KB1 signaling, which promotes endothelial cell senescence and inflammation and implicates NOS3/eNOS dysfunction. Can inhibit endothelial autophagy independently of its enzymatic activity implicating mTORC2 signaling. Involved in vascular smooth muscle cell senescence and apoptosis independently of its enzymatic activity. This chain is Arginase-2, mitochondrial (ARG2), found in Oryctolagus cuniculus (Rabbit).